Here is a 185-residue protein sequence, read N- to C-terminus: METPGVLLVMGVSGSGKSTVGALLANKLGWKFYDADDYHSEENRIKMGKGVPLNDQDRIPWLCSLHDILLRDVASGQSVVLACSALKKMYRDILNRGGSDVPPRSDESAKEEPLAGGKFLVVHLCGSFELIYGRLLQRRGHFMPPELLQSQFSILEPPSAPENFIHISVDKGLPEIAAAVLEALK.

Residue Gly11 to Ser18 participates in ATP binding.

This sequence belongs to the gluconokinase GntK/GntV family.

The enzyme catalyses D-gluconate + ATP = 6-phospho-D-gluconate + ADP + H(+). It participates in carbohydrate acid metabolism; D-gluconate degradation. The protein is Probable gluconokinase (Idnk) of Rattus norvegicus (Rat).